The following is a 198-amino-acid chain: Protein RD3-like (198 aa).

Positions 28-57 (KTLLRELKWHLKERERLIQEIENEQKVKKT) form a coiled coil. The segment at 133–168 (GSEQEDLEDSGSMDCSAPSVIQGDSSKRADKDEIPT) is disordered. Over residues 157 to 166 (SSKRADKDEI) the composition is skewed to basic and acidic residues.

The chain is Protein RD3-like (RD3L) from Homo sapiens (Human).